The chain runs to 584 residues: uncharacterized protein (584 aa).

Residues 1–27 (MGLSRKKIFTWPLLLTGMAVVSTTFSS) form the signal peptide. Residue Cys28 is the site of N-palmitoyl cysteine attachment. Cys28 is lipidated: S-diacylglycerol cysteine. The interval 530–570 (NLPKKEGSTNQANQQTNQTNRSTDATKKDSSSDETNKNPLA) is disordered. The segment covering 538–552 (TNQANQQTNQTNRST) has biased composition (low complexity). Residues 553–565 (DATKKDSSSDETN) are compositionally biased toward basic and acidic residues.

Belongs to the MG067/MG068/MG395 family.

Its subcellular location is the cell membrane. This is an uncharacterized protein from Mycoplasmoides gallisepticum (strain R(low / passage 15 / clone 2)) (Mycoplasma gallisepticum).